Here is a 713-residue protein sequence, read N- to C-terminus: Cyclomaltodextrin glucanotransferase (713 aa).

The N-terminal stretch at 1–27 (MKKISKLTTALALSLSLALSLLGPAHA) is a signal peptide. The interval 28–165 (APDTSVSNKQ…NIKVIIDFAP (138 aa)) is A1. Positions 54, 56, 59, and 60 each coordinate Ca(2+). An intrachain disulfide couples cysteine 70 to cysteine 77. Residues glycine 78 and aspartate 80 each contribute to the Ca(2+) site. 127-128 (YW) provides a ligand contact to substrate. Asparagine 166 contributes to the Ca(2+) binding site. Residues 166-229 (NHTSPASLDQ…NLYDLADLNH (64 aa)) are b. Histidine 167 is a substrate binding site. Residue isoleucine 217 participates in Ca(2+) binding. 220-223 (NLYD) serves as a coordination point for substrate. Aspartate 226 contributes to the Ca(2+) binding site. The segment at 230 to 433 (NNSTVDTYLK…LRKSNPAIAY (204 aa)) is A2. Position 254 (arginine 254) interacts with substrate. Catalysis depends on aspartate 256, which acts as the Nucleophile. 259-260 (KH) lines the substrate pocket. Residue histidine 260 participates in Ca(2+) binding. Glutamate 284 (proton donor) is an active-site residue. The substrate site is built by histidine 354, aspartate 398, and arginine 402. The interval 434–522 (GTTQERWINN…GTAVWQYTTA (89 aa)) is c. A d region spans residues 523-609 (VTAPTIGHVG…SNVHDNFEVL (87 aa)). The IPT/TIG domain maps to 526–607 (PTIGHVGPMM…TSSNVHDNFE (82 aa)). Positions 608–713 (VLSGDQVSVR…TATINVNWQP (106 aa)) constitute a CBM20 domain. The segment at 610–713 (SGDQVSVRFV…TATINVNWQP (104 aa)) is e.

It belongs to the glycosyl hydrolase 13 family. Monomer. Requires Ca(2+) as cofactor.

The protein resides in the secreted. The enzyme catalyses Cyclizes part of a (1-&gt;4)-alpha-D-glucan chain by formation of a (1-&gt;4)-alpha-D-glucosidic bond.. This Bacillus sp. (strain 17-1) protein is Cyclomaltodextrin glucanotransferase (cgt).